The primary structure comprises 104 residues: Small ubiquitin-related modifier 3 (104 aa).

Glycyl lysine isopeptide (Lys-Gly) (interchain with G-Cter in SUMO2) cross-links involve residues Lys5 and Lys7. Residue Lys11 forms a Glycyl lysine isopeptide (Lys-Gly) (interchain with G-Cter in SUMO); alternate linkage. Lys11 participates in a covalent cross-link: Glycyl lysine isopeptide (Lys-Gly) (interchain with G-Cter in SUMO2); alternate. One can recognise a Ubiquitin-like domain in the interval 15–92; it reads DHINLKVAGQ…IDVFQQQTGG (78 aa). A Glycyl lysine isopeptide (Gly-Lys) (interchain with K-? in acceptor proteins) cross-link involves residue Gly92. The propeptide occupies 93–104; that stretch reads SRVASCLLGSGL.

Belongs to the ubiquitin family. SUMO subfamily. In terms of assembly, interacts with SAE2 and UBE2I. Covalently attached to a number of proteins. Interacts with USP25 (via ts SIM domain); the interaction sumoylates USP25 and inhibits its ubiquitin hydrolyzing activity. Interacts with BMAL1. In terms of processing, polymeric chains can be formed through Lys-11 cross-linking. Post-translationally, cleavage of precursor form by SENP1, SENP2 or SENP5 is necessary for function.

The protein resides in the cytoplasm. It is found in the nucleus. Its subcellular location is the PML body. Its function is as follows. Ubiquitin-like protein which can be covalently attached to target lysines either as a monomer or as a lysine-linked polymer. Does not seem to be involved in protein degradation and may function as an antagonist of ubiquitin in the degradation process. Plays a role in a number of cellular processes such as nuclear transport, DNA replication and repair, mitosis and signal transduction. Covalent attachment to its substrates requires prior activation by the E1 complex SAE1-SAE2 and linkage to the E2 enzyme UBE2I, and can be promoted by an E3 ligase such as PIAS1-4, RANBP2 or CBX4. Plays a role in the regulation of sumoylation status of SETX. The protein is Small ubiquitin-related modifier 3 (SUMO3) of Bos taurus (Bovine).